We begin with the raw amino-acid sequence, 629 residues long: Probable potassium transport system protein Kup 3 (629 aa).

Transmembrane regions (helical) follow at residues 20-40 (LSLSALGIVYGDIGTSPLYTF), 54-74 (VTTIMGSASLIIWTLIIIASV), 106-126 (PFIIAVGLMGAALIYGDGTIT), 143-163 (PSLKYYVLPIAITILITLFAI), 171-191 (IGKAFGPVMAFWFLTIGILGA), 212-232 (FLFSNGATGFFILCGVFLCVT), 253-273 (WFGLAFPSLIFNYLGQAALVL), 291-311 (FLLPLIILSTVATIIASQAII), 343-363 (IYIGVVNWLLMLATLGLIIGF), 372-392 (AYGIAVSATMLCTSVLLFIAL), 400-420 (IIKSGLVAGLFMIVDASFFAA), and 425-445 (FINGGYIPITLAIIIYSMMYI).

Belongs to the HAK/KUP transporter (TC 2.A.72) family.

The protein resides in the cell inner membrane. It catalyses the reaction K(+)(in) + H(+)(in) = K(+)(out) + H(+)(out). Functionally, transport of potassium into the cell. Likely operates as a K(+):H(+) symporter. The chain is Probable potassium transport system protein Kup 3 from Legionella pneumophila (strain Corby).